Here is a 207-residue protein sequence, read N- to C-terminus: Ubiquinol-cytochrome c reductase iron-sulfur subunit (207 aa).

The chain crosses the membrane as a helical span at residues 24 to 44 (LVAATSVVGAVGAGYALVPFV). In terms of domain architecture, Rieske spans 100-199 (PKLVDPTSEV…HVYLNDTTIL (100 aa)). 4 residues coordinate [2Fe-2S] cluster: Cys-134, His-136, Cys-162, and His-165. Cys-139 and Cys-164 are oxidised to a cystine.

The main subunits of complex b-c1 are: cytochrome b, cytochrome c1 and the Rieske protein. [2Fe-2S] cluster is required as a cofactor.

Its subcellular location is the cell membrane. The catalysed reaction is a quinol + 2 Fe(III)-[cytochrome c](out) = a quinone + 2 Fe(II)-[cytochrome c](out) + 2 H(+)(out). In terms of biological role, component of the ubiquinol-cytochrome c reductase complex (complex III or cytochrome b-c1 complex), which is a respiratory chain that generates an electrochemical potential coupled to ATP synthesis. The chain is Ubiquinol-cytochrome c reductase iron-sulfur subunit (petA) from Allochromatium vinosum (strain ATCC 17899 / DSM 180 / NBRC 103801 / NCIMB 10441 / D) (Chromatium vinosum).